Reading from the N-terminus, the 159-residue chain is MRVGFGYDVHAFVEGRPLVLGGVKVPHDRGLLGHSDADVLLHAICDALLGGAALGDIGRHFPDTDPRFKGISSLLLLRQTVELVRRAGFRIANIDTTLVLQKPRLAPYIARMAEEIGRATDLPVSSVNVKATTTEKLGFAGREEGVAAYAVVLLRSDGR.

Positions 8 and 10 each coordinate a divalent metal cation. 4-CDP-2-C-methyl-D-erythritol 2-phosphate-binding positions include 8–10 (DVH) and 34–35 (HS). Position 42 (histidine 42) interacts with a divalent metal cation. Residues 56–58 (DIG), 61–65 (FPDTD), 132–135 (TTTE), phenylalanine 139, and arginine 142 contribute to the 4-CDP-2-C-methyl-D-erythritol 2-phosphate site.

The protein belongs to the IspF family. In terms of assembly, homotrimer. The cofactor is a divalent metal cation.

It carries out the reaction 4-CDP-2-C-methyl-D-erythritol 2-phosphate = 2-C-methyl-D-erythritol 2,4-cyclic diphosphate + CMP. The protein operates within isoprenoid biosynthesis; isopentenyl diphosphate biosynthesis via DXP pathway; isopentenyl diphosphate from 1-deoxy-D-xylulose 5-phosphate: step 4/6. Its function is as follows. Involved in the biosynthesis of isopentenyl diphosphate (IPP) and dimethylallyl diphosphate (DMAPP), two major building blocks of isoprenoid compounds. Catalyzes the conversion of 4-diphosphocytidyl-2-C-methyl-D-erythritol 2-phosphate (CDP-ME2P) to 2-C-methyl-D-erythritol 2,4-cyclodiphosphate (ME-CPP) with a corresponding release of cytidine 5-monophosphate (CMP). This chain is 2-C-methyl-D-erythritol 2,4-cyclodiphosphate synthase, found in Syntrophobacter fumaroxidans (strain DSM 10017 / MPOB).